Reading from the N-terminus, the 99-residue chain is Small ribosomal subunit protein uS17 (99 aa).

Belongs to the universal ribosomal protein uS17 family. In terms of assembly, part of the 30S ribosomal subunit.

Functionally, one of the primary rRNA binding proteins, it binds specifically to the 5'-end of 16S ribosomal RNA. This chain is Small ribosomal subunit protein uS17, found in Thermosipho melanesiensis (strain DSM 12029 / CIP 104789 / BI429).